The chain runs to 50 residues: Sperm protamine P1 (50 aa).

Intrachain disulfides connect C7–C15 and C39–C47.

Belongs to the protamine P1 family. As to quaternary structure, cross-linked by interchain disulfide bonds around the DNA-helix. Testis.

Its subcellular location is the nucleus. The protein resides in the chromosome. Functionally, protamines substitute for histones in the chromatin of sperm during the haploid phase of spermatogenesis. They compact sperm DNA into a highly condensed, stable and inactive complex. The protein is Sperm protamine P1 (PRM1) of Oryctolagus cuniculus (Rabbit).